Reading from the N-terminus, the 453-residue chain is Plasmepsin II (453 aa).

Over 1-37 the chain is Cytoplasmic; the sequence is MDITVREHDFKHGFIKSNSTFDGLNIDNSKNKKKIQK. A propeptide spanning residues 1-124 is cleaved from the precursor; sequence MDITVREHDF…SGLTKTNYLG (124 aa). Residues 38 to 58 form a helical; Signal-anchor for type II membrane protein membrane-spanning segment; the sequence is GFQILYVLLFCSVMCGLFYYV. Topologically, residues 59–453 are lumenal; sequence YENVWLQRDN…VGIALAKKNL (395 aa). Residues 140 to 447 enclose the Peptidase A1 domain; sequence FYGDAEVGDN…DYDNQSVGIA (308 aa). The active site involves aspartate 158. A disulfide bond links cysteine 171 and cysteine 176. Residue aspartate 338 is part of the active site. Cysteine 373 and cysteine 409 are joined by a disulfide.

It belongs to the peptidase A1 family. Component of the hemozoin formation complex (HFC) composed of falcipains FP2A and/or FP2B, plasmepsins PMII, PMIII/HAP and PMIV, heme detoxifying protein HDP and falcilysin FLN. The HFC complex is involved in hemoglobin degradation and detoxification of heme in the food vacuole during the asexual blood stage. In terms of processing, not N-glycosylated. Post-translationally, proteolytically cleaved into the soluble active mature form in the digestive vacuole by cysteine protease falcipains; the process begins at the early ring stage. Proteolysis requires an acidic environment. In absence of falcipains, autoprocessing may serve as an alternate activation system.

It is found in the membrane. The protein localises to the vacuole lumen. It localises to the vacuole membrane. It catalyses the reaction Hydrolysis of the bonds linking certain hydrophobic residues in hemoglobin or globin. Also cleaves small molecules substrates such as Ala-Leu-Glu-Arg-Thr-Phe-|-Phe(NO2)-Ser-Phe-Pro-Thr.. Inhibited by pepstatin A. Inhibited by KNI derived compounds (KNI-10742, 10743, 10395, 10333, and 10343). Its function is as follows. During the asexual blood stage, participates in initial cleavage of native host hemoglobin (Hb) resulting in Hb denaturation. May cleave preferentially denatured hemoglobin that has been cleaved by PMI. Digestion of host Hb is an essential step which provides the parasite with amino acids for protein synthesis, and regulates osmolarity. The protein is Plasmepsin II of Plasmodium falciparum (isolate 3D7).